The chain runs to 346 residues: Holliday junction branch migration complex subunit RuvB (346 aa).

The large ATPase domain (RuvB-L) stretch occupies residues 2 to 183; the sequence is TDDRIIGAGA…FGIVQRLEFY (182 aa). Residues I22, R23, G64, K67, T68, T69, 130–132, R173, Y183, and R220 each bind ATP; that span reads EDF. T68 lines the Mg(2+) pocket. Residues 184-254 form a small ATPAse domain (RuvB-S) region; the sequence is SVEELTRIVR…VAQAAMKMLK (71 aa). Positions 257-346 are head domain (RuvB-H); that stretch reads PEGFDELDRR…DLFAEVPDVG (90 aa). R293, R312, and R317 together coordinate DNA.

It belongs to the RuvB family. Homohexamer. Forms an RuvA(8)-RuvB(12)-Holliday junction (HJ) complex. HJ DNA is sandwiched between 2 RuvA tetramers; dsDNA enters through RuvA and exits via RuvB. An RuvB hexamer assembles on each DNA strand where it exits the tetramer. Each RuvB hexamer is contacted by two RuvA subunits (via domain III) on 2 adjacent RuvB subunits; this complex drives branch migration. In the full resolvosome a probable DNA-RuvA(4)-RuvB(12)-RuvC(2) complex forms which resolves the HJ.

It is found in the cytoplasm. It catalyses the reaction ATP + H2O = ADP + phosphate + H(+). In terms of biological role, the RuvA-RuvB-RuvC complex processes Holliday junction (HJ) DNA during genetic recombination and DNA repair, while the RuvA-RuvB complex plays an important role in the rescue of blocked DNA replication forks via replication fork reversal (RFR). RuvA specifically binds to HJ cruciform DNA, conferring on it an open structure. The RuvB hexamer acts as an ATP-dependent pump, pulling dsDNA into and through the RuvAB complex. RuvB forms 2 homohexamers on either side of HJ DNA bound by 1 or 2 RuvA tetramers; 4 subunits per hexamer contact DNA at a time. Coordinated motions by a converter formed by DNA-disengaged RuvB subunits stimulates ATP hydrolysis and nucleotide exchange. Immobilization of the converter enables RuvB to convert the ATP-contained energy into a lever motion, pulling 2 nucleotides of DNA out of the RuvA tetramer per ATP hydrolyzed, thus driving DNA branch migration. The RuvB motors rotate together with the DNA substrate, which together with the progressing nucleotide cycle form the mechanistic basis for DNA recombination by continuous HJ branch migration. Branch migration allows RuvC to scan DNA until it finds its consensus sequence, where it cleaves and resolves cruciform DNA. The chain is Holliday junction branch migration complex subunit RuvB from Stenotrophomonas maltophilia (strain R551-3).